Consider the following 178-residue polypeptide: Putative pre-16S rRNA nuclease (178 aa).

Basic and acidic residues-rich tracts occupy residues methionine 1–arginine 18 and proline 50–proline 60. Disordered stretches follow at residues methionine 1 to glycine 23 and serine 36 to proline 60.

The protein belongs to the YqgF nuclease family.

The protein resides in the cytoplasm. Functionally, could be a nuclease involved in processing of the 5'-end of pre-16S rRNA. This is Putative pre-16S rRNA nuclease from Rhodococcus opacus (strain B4).